Reading from the N-terminus, the 117-residue chain is Large ribosomal subunit protein bL20 (117 aa).

It belongs to the bacterial ribosomal protein bL20 family.

Its function is as follows. Binds directly to 23S ribosomal RNA and is necessary for the in vitro assembly process of the 50S ribosomal subunit. It is not involved in the protein synthesizing functions of that subunit. In Natranaerobius thermophilus (strain ATCC BAA-1301 / DSM 18059 / JW/NM-WN-LF), this protein is Large ribosomal subunit protein bL20.